A 545-amino-acid polypeptide reads, in one-letter code: ATP synthase subunit alpha (545 aa).

173–180 (GDRQTGKS) contributes to the ATP binding site.

The protein belongs to the ATPase alpha/beta chains family. In terms of assembly, F-type ATPases have 2 components, CF(1) - the catalytic core - and CF(0) - the membrane proton channel. CF(1) has five subunits: alpha(3), beta(3), gamma(1), delta(1), epsilon(1). CF(0) has three main subunits: a(1), b(2) and c(9-12). The alpha and beta chains form an alternating ring which encloses part of the gamma chain. CF(1) is attached to CF(0) by a central stalk formed by the gamma and epsilon chains, while a peripheral stalk is formed by the delta and b chains.

It localises to the cell membrane. It carries out the reaction ATP + H2O + 4 H(+)(in) = ADP + phosphate + 5 H(+)(out). Its function is as follows. Produces ATP from ADP in the presence of a proton gradient across the membrane. The alpha chain is a regulatory subunit. The protein is ATP synthase subunit alpha of Arthrobacter sp. (strain FB24).